We begin with the raw amino-acid sequence, 226 residues long: Protein transport protein sec20 (226 aa).

Topologically, residues 1-189 are cytoplasmic; that stretch reads MADVLNALEE…IKSLKLSDRS (189 aa). The stretch at 53–75 forms a coiled coil; it reads LRYEKAVQEYIRLNRRYRNKIAS. The residue at position 97 (S97) is a Phosphoserine. The chain crosses the membrane as a helical; Anchor for type IV membrane protein span at residues 190–210; the sequence is DYFLVVSGFGFFIFVVVYLLF. At 211–226 the chain is on the lumenal side; sequence KRIVWPILSMFLWFLR.

Belongs to the SEC20 family. As to quaternary structure, component of a SNARE complex consisting of ufe1, sec20, sec22 and use1. Interacts with tip20 through its cytoplasmic domain.

Its subcellular location is the endoplasmic reticulum membrane. Functionally, SNARE required for targeting and fusion of Golgi-derived retrograde transport vesicles with the ER. This chain is Protein transport protein sec20, found in Schizosaccharomyces pombe (strain 972 / ATCC 24843) (Fission yeast).